Reading from the N-terminus, the 330-residue chain is Serine/threonine-protein phosphatase beta isoform (330 aa).

Asp-63, His-65, Asp-91, and Asn-123 together coordinate Mn(2+). His-124 functions as the Proton donor in the catalytic mechanism. Mn(2+)-binding residues include His-172 and His-247. Polar residues predominate over residues 308-319 (GMNSSRPTTPQR). Residues 308–330 (GMNSSRPTTPQRSAPMLATNKKK) are disordered. Residues Thr-315 and Thr-316 each carry the phosphothreonine modification.

It belongs to the PPP phosphatase family. PP-1 subfamily. Interacts with Nop17l. Interacts with uri; uri inhibits flw phosphatase activity. Mn(2+) is required as a cofactor.

The enzyme catalyses O-phospho-L-seryl-[protein] + H2O = L-seryl-[protein] + phosphate. It catalyses the reaction O-phospho-L-threonyl-[protein] + H2O = L-threonyl-[protein] + phosphate. Functionally, required for cell adhesion in non-muscle tissues and in maintenance of muscle attachment. Vital for larval development. The protein is Serine/threonine-protein phosphatase beta isoform (flw) of Drosophila melanogaster (Fruit fly).